The following is a 495-amino-acid chain: Lysine--tRNA ligase (495 aa).

Glutamate 406 and glutamate 413 together coordinate Mg(2+).

Belongs to the class-II aminoacyl-tRNA synthetase family. Homodimer. The cofactor is Mg(2+).

The protein localises to the cytoplasm. It catalyses the reaction tRNA(Lys) + L-lysine + ATP = L-lysyl-tRNA(Lys) + AMP + diphosphate. The chain is Lysine--tRNA ligase from Staphylococcus saprophyticus subsp. saprophyticus (strain ATCC 15305 / DSM 20229 / NCIMB 8711 / NCTC 7292 / S-41).